The following is a 379-amino-acid chain: F-box protein At1g30200 (379 aa).

Residues 24–72 (DHFDLLPDSLLLLIFDKVADVKDLGRCCIVSRRFHSLVPFVENVLVRVD) form the F-box domain.

The chain is F-box protein At1g30200 from Arabidopsis thaliana (Mouse-ear cress).